The primary structure comprises 125 residues: Large ribosomal subunit protein uL22c (125 aa).

This sequence belongs to the universal ribosomal protein uL22 family. In terms of assembly, part of the 50S ribosomal subunit.

It localises to the plastid. It is found in the chloroplast. Functionally, this protein binds specifically to 23S rRNA. Its function is as follows. The globular domain of the protein is located near the polypeptide exit tunnel on the outside of the subunit, while an extended beta-hairpin is found that lines the wall of the exit tunnel in the center of the 70S ribosome. This chain is Large ribosomal subunit protein uL22c (rpl22), found in Huperzia lucidula (Shining clubmoss).